An 81-amino-acid chain; its full sequence is Prophage excisionase-like protein (81 aa).

This sequence to lambdoid phages excisionases.

This is Prophage excisionase-like protein (xisE) from Escherichia coli (strain K12).